A 360-amino-acid polypeptide reads, in one-letter code: Spermidine/putrescine-binding periplasmic protein 1 (360 aa).

Positions 1–16 are cleaved as a signal peptide; that stretch reads MKKFAGLITASFVAAT.

Belongs to the bacterial solute-binding protein PotD/PotF family.

It localises to the periplasm. Required for the activity of the bacterial periplasmic transport system of putrescine and spermidine. Polyamine binding protein. This chain is Spermidine/putrescine-binding periplasmic protein 1 (potD-B), found in Haemophilus influenzae (strain ATCC 51907 / DSM 11121 / KW20 / Rd).